The chain runs to 225 residues: PKHD-type hydroxylase YbiX (225 aa).

The 100-residue stretch at 78–177 folds into the Fe2OG dioxygenase domain; the sequence is TLSTPLFNRY…RVASFMWIQS (100 aa). Positions 96, 98, and 158 each coordinate Fe cation. R168 provides a ligand contact to 2-oxoglutarate.

Fe(2+) is required as a cofactor. It depends on L-ascorbate as a cofactor.

The chain is PKHD-type hydroxylase YbiX from Escherichia coli O7:K1 (strain IAI39 / ExPEC).